Consider the following 101-residue polypeptide: NADH-quinone oxidoreductase subunit K (101 aa).

Helical transmembrane passes span 2 to 22, 29 to 49, and 63 to 83; these read ISLN…LVGV, IMLF…LVAI, and MFII…LILW.

Belongs to the complex I subunit 4L family. NDH-1 is composed of 14 different subunits. Subunits NuoA, H, J, K, L, M, N constitute the membrane sector of the complex.

The protein resides in the cell inner membrane. The enzyme catalyses a quinone + NADH + 5 H(+)(in) = a quinol + NAD(+) + 4 H(+)(out). Its function is as follows. NDH-1 shuttles electrons from NADH, via FMN and iron-sulfur (Fe-S) centers, to quinones in the respiratory chain. The immediate electron acceptor for the enzyme in this species is believed to be ubiquinone. Couples the redox reaction to proton translocation (for every two electrons transferred, four hydrogen ions are translocated across the cytoplasmic membrane), and thus conserves the redox energy in a proton gradient. This Campylobacter hominis (strain ATCC BAA-381 / DSM 21671 / CCUG 45161 / LMG 19568 / NCTC 13146 / CH001A) protein is NADH-quinone oxidoreductase subunit K.